The sequence spans 270 residues: MNETIEPLNPIAFQLGPIAVHWYGIIIGLGALLGLWLAVREGERRGLHKDTFVDLVLFAIPIAILCARAYYVIFQWGYYSEHPDQIIQIWNGGLAIHGGLIGAVLTGIIYAKVKGLSFWKLADIAAPSILLGQAIGRWGNFMNQEAHGEAVSRAFLENLHLPDFIINQMYIDGQYYQPTFLYESLWSFTGVVVLLLLRKANLKRGELFLIYVIWYSMGRYFIEGLRTDSLMLTENLRIAQVISIVLILCAAALIAYRRFKGREIKRYQEM.

A run of 4 helical transmembrane segments spans residues 18–38, 55–75, 89–109, and 115–135; these read IAVH…LWLA, LVLF…VIFQ, IWNG…TGII, and GLSF…GQAI. R137 contacts a 1,2-diacyl-sn-glycero-3-phospho-(1'-sn-glycerol). The next 3 helical transmembrane spans lie at 177 to 197, 205 to 225, and 236 to 256; these read QPTF…LLLL, GELF…IEGL, and LRIA…LIAY.

This sequence belongs to the Lgt family.

It localises to the cell membrane. The enzyme catalyses L-cysteinyl-[prolipoprotein] + a 1,2-diacyl-sn-glycero-3-phospho-(1'-sn-glycerol) = an S-1,2-diacyl-sn-glyceryl-L-cysteinyl-[prolipoprotein] + sn-glycerol 1-phosphate + H(+). Its pathway is protein modification; lipoprotein biosynthesis (diacylglyceryl transfer). Catalyzes the transfer of the diacylglyceryl group from phosphatidylglycerol to the sulfhydryl group of the N-terminal cysteine of a prolipoprotein, the first step in the formation of mature lipoproteins. The protein is Phosphatidylglycerol--prolipoprotein diacylglyceryl transferase of Bacillus licheniformis (strain ATCC 14580 / DSM 13 / JCM 2505 / CCUG 7422 / NBRC 12200 / NCIMB 9375 / NCTC 10341 / NRRL NRS-1264 / Gibson 46).